Consider the following 137-residue polypeptide: Probable leaf thionin (137 aa).

A signal peptide spans 1–28; that stretch reads MATNKSIKSVVICVLILGLVLEQVQVEG. Intrachain disulfides connect Cys-31–Cys-68, Cys-32–Cys-60, Cys-40–Cys-58, and Cys-44–Cys-54. Residues 75-137 constitute a propeptide, acidic domain; that stretch reads LNLLPESGEP…DGDVIQSVEA (63 aa).

It belongs to the plant thionin (TC 1.C.44) family. 4 C-C subfamily.

The protein localises to the secreted. In terms of biological role, thionins are small plant proteins which are toxic to animal cells. They seem to exert their toxic effect at the level of the cell membrane. Their precise function is not known. The protein is Probable leaf thionin of Hordeum vulgare (Barley).